Reading from the N-terminus, the 328-residue chain is Ornithine carbamoyltransferase, catabolic (328 aa).

Carbamoyl phosphate-binding positions include 56 to 59, Gln-83, Arg-107, and 134 to 137; these read STRT and HPTQ. Residues Asn-166, Asp-230, and 234-235 contribute to the L-ornithine site; that span reads SM. Carbamoyl phosphate-binding positions include 270–271 and Arg-315; that span reads CL.

Belongs to the aspartate/ornithine carbamoyltransferase superfamily. OTCase family.

The protein resides in the cytoplasm. It carries out the reaction carbamoyl phosphate + L-ornithine = L-citrulline + phosphate + H(+). It functions in the pathway amino-acid degradation; L-arginine degradation via ADI pathway; carbamoyl phosphate from L-arginine: step 2/2. Functionally, reversibly catalyzes the transfer of the carbamoyl group from carbamoyl phosphate (CP) to the N(epsilon) atom of ornithine (ORN) to produce L-citrulline. This chain is Ornithine carbamoyltransferase, catabolic (arcB), found in Borreliella afzelii (Borrelia afzelii).